We begin with the raw amino-acid sequence, 295 residues long: uncharacterized protein (295 aa).

Residues methionine 1–arginine 13 show a composition bias toward basic residues. Disordered regions lie at residues methionine 1–serine 111 and threonine 183–serine 295. The segment covering alanine 57–proline 67 has biased composition (low complexity). Positions alanine 68–proline 77 are enriched in pro residues. 2 stretches are compositionally biased toward basic and acidic residues: residues leucine 245–proline 257 and glycine 280–serine 295.

This is an uncharacterized protein from Homo sapiens (Human).